Reading from the N-terminus, the 307-residue chain is Probable thioesterase KK1J (307 aa).

The protein belongs to the AMT4 thioesterase family.

It functions in the pathway secondary metabolite biosynthesis. In terms of biological role, probable thioesterase; part of the gene cluster that mediates the biosynthesis of KK-1, a novel cyclic depsipeptide with 10 residues which is a promising active compound with high activity against many plant pathogens, especially Botrytis cinerea. Within the pathway, kk1J is not essential for the biosynthesis of KK-1, but plays a role for efficient production via correction of peptide chain synthesis by kk1B. The nonribosomal peptide synthetase (NRPS) kk1B catalyzes the elongation and cyclization of the decapeptide chain composed of 1 D-lactic acid residue (D-Lac), 1 pipecolic acid residue (Pip), 1 aspartic acid residue (Asp), 1 isoleucine residue (Ile), 1 glycine residue (Gly), 1 tyrosine residue (Tyr) and 4 valine residues (Val). The Asp, Ile and 3 Val residues are N-methylated by the 5 methyltransferase domains from the NRPS (found in modules 3, 5, 6, 7 and 9), whereas the Tyr residue is O-methylated by the cluster encoded O-methyltransferase kk1A. The thioesterase kk1J is likely to be involved in the corrective mechanism of peptide chain synthesis. The D-lactate dehydrogenase kk1H is involved in the synthesis of D-lactic acid from pyruvic acid, which is recognized by the A domain of the first kk1B module. The pyrroline-5-carboxylate reductase kk1I is involved in the synthesis of the L-pipecolic acid residue of KK-1 from delta-1-pyrroline-5-carboxylate (P5C), a metabolic intermediate of lysine. It still is unclear how kk1C and kk1D are involved in the production of KK-1. The protein is Probable thioesterase KK1J of Curvularia clavata.